The sequence spans 303 residues: MSQAFTESVKTSLGPNATPRAKKLIASLVQHVHDFARENHLTTEDWLWGVDFINRIGQMSDSRRNEGILVCDIIGLETLVDALTNESEQSNHTSSAILGPFYLPDSPVYPNGGSIVQKAIPTDVKCFVRGKVTDTEGKPLGGAQLEVWQCNSAGFYSQQADHDGPEFNLRGTFITDDEGNYSFECLRPTSYPIPYDGPAGDLLKIMDRHPNRPSHIHWRVSHPGYHTLITQIYDAECPYTNNDSVYAVKDDIIVHFEKVDNKDKDLVGKVEYKLDYDISLATESSIQEARAAAKARQDAEIKL.

Fe cation contacts are provided by tyrosine 156, tyrosine 191, histidine 215, and histidine 217.

As to quaternary structure, homodimer. Fe(3+) serves as cofactor.

The catalysed reaction is catechol + O2 = cis,cis-muconate + 2 H(+). It participates in aromatic compound metabolism; beta-ketoadipate pathway; 5-oxo-4,5-dihydro-2-furylacetate from catechol: step 1/3. Its activity is regulated as follows. Inhibited by Ag(+), Cu(+), Hg(2+) and Pb(2+). In terms of biological role, can cleave 4-methylcatechol at lower rates than catechol, but has no activity with 3-methylcatechol, 4-chlorocatechol, 4-carboxycatechol or hydroxyquinol. In Candida albicans (strain SC5314 / ATCC MYA-2876) (Yeast), this protein is Catechol 1,2-dioxygenase (HQD2).